A 152-amino-acid polypeptide reads, in one-letter code: Large ribosomal subunit protein bL9 (152 aa).

It belongs to the bacterial ribosomal protein bL9 family.

In terms of biological role, binds to the 23S rRNA. This chain is Large ribosomal subunit protein bL9, found in Picosynechococcus sp. (strain ATCC 27264 / PCC 7002 / PR-6) (Agmenellum quadruplicatum).